We begin with the raw amino-acid sequence, 122 residues long: Large ribosomal subunit protein uL14 (122 aa).

This sequence belongs to the universal ribosomal protein uL14 family. Part of the 50S ribosomal subunit. Forms a cluster with proteins L3 and L19. In the 70S ribosome, L14 and L19 interact and together make contacts with the 16S rRNA in bridges B5 and B8.

Functionally, binds to 23S rRNA. Forms part of two intersubunit bridges in the 70S ribosome. This chain is Large ribosomal subunit protein uL14, found in Xylella fastidiosa (strain M23).